The primary structure comprises 327 residues: MIPGPATLPDLLDRLHVVALPMRVRFRGITTREVALIEGPSGWGEFGAFLEYQPPEAAAWLASAIDAAYGQPPPVRRGRIPINATVPAVPPAQVPELLARFPGARTAKVKVAEPGQTLASDVERVNAVRALVPTVRVDANGGWSVDQAAQAAVALTADGPLEYLEQPCATVGELAELRRRIEVPIAADEAIRKAEDPLAVVRAGAADVAVLKVAPLGGVWALLDIAAQIDIPVVISSALDSAVGIAAGLSAAAALPQLQHACGLGTGGLFVEDVAEPAIPVDGALAPQRVVPDPARLRALGAAPDRRQWWIDRIKACYPLLYRRSGD.

Residue Lys110 is the Proton donor of the active site. Positions 138, 165, and 188 each coordinate Mg(2+). Catalysis depends on Lys212, which acts as the Proton acceptor.

The protein belongs to the mandelate racemase/muconate lactonizing enzyme family. MenC type 1 subfamily. It depends on a divalent metal cation as a cofactor.

The catalysed reaction is (1R,6R)-6-hydroxy-2-succinyl-cyclohexa-2,4-diene-1-carboxylate = 2-succinylbenzoate + H2O. Its pathway is quinol/quinone metabolism; 1,4-dihydroxy-2-naphthoate biosynthesis; 1,4-dihydroxy-2-naphthoate from chorismate: step 4/7. It participates in quinol/quinone metabolism; menaquinone biosynthesis. Functionally, converts 2-succinyl-6-hydroxy-2,4-cyclohexadiene-1-carboxylate (SHCHC) to 2-succinylbenzoate (OSB). The protein is o-succinylbenzoate synthase of Mycobacterium marinum (strain ATCC BAA-535 / M).